The primary structure comprises 204 residues: Large ribosomal subunit protein eL15 (204 aa).

The protein belongs to the eukaryotic ribosomal protein eL15 family. As to quaternary structure, component of the large ribosomal subunit.

It is found in the cytoplasm. In terms of biological role, component of the large ribosomal subunit. The ribosome is a large ribonucleoprotein complex responsible for the synthesis of proteins in the cell. The chain is Large ribosomal subunit protein eL15 (rpl15) from Hypophthalmichthys nobilis (Bighead carp).